Here is a 388-residue protein sequence, read N- to C-terminus: uncharacterized protein (388 aa).

This is an uncharacterized protein from Ictaluridae (bullhead catfishes).